Reading from the N-terminus, the 106-residue chain is uncharacterized protein (106 aa).

Its subcellular location is the mitochondrion. This is an uncharacterized protein from Arabidopsis thaliana (Mouse-ear cress).